We begin with the raw amino-acid sequence, 115 residues long: Arsenic resistance transcriptional regulator ArsR2 (115 aa).

Positions 1–90 (MITPPDVFKS…EMLQVTLQAN (90 aa)) constitute an HTH arsR-type domain. Arsenite contacts are provided by C30 and C32. Positions 31-54 (VCELMCALNDSQPKISRHLAQLRS) form a DNA-binding region, H-T-H motif.

In terms of assembly, homodimer.

It is found in the cytoplasm. In terms of biological role, binds arsenite and regulates the expression of arsenic efflux pumps. In vitro, also binds antimony and bismuth, but not arsenate. The protein is Arsenic resistance transcriptional regulator ArsR2 of Pseudomonas putida (strain ATCC 47054 / DSM 6125 / CFBP 8728 / NCIMB 11950 / KT2440).